We begin with the raw amino-acid sequence, 88 residues long: Kunitz-type U15-theraphotoxin-Hhn1q (88 aa).

A signal peptide spans 1–27 (MGIARILSAVLFLSVLFVVTFPTLLSA). A propeptide spanning residues 28 to 33 (DHHDGR) is cleaved from the precursor. A BPTI/Kunitz inhibitor domain is found at 37–85 (CRLPSDRGRCKASFERWYFNGTTCTKFVYGGYGGNDNRFPTEKACMERC). 2 cysteine pairs are disulfide-bonded: C37/C85 and C60/C81.

It belongs to the venom Kunitz-type family. 01 (intermediate) subfamily. As to expression, expressed by the venom gland.

The protein resides in the secreted. Functionally, serine protease inhibitor that inhibits trypsin at a molar ratio of 1:1. This is Kunitz-type U15-theraphotoxin-Hhn1q from Cyriopagopus hainanus (Chinese bird spider).